A 171-amino-acid chain; its full sequence is MVKLNSNPSEKGTKPPSVEDGFQTVPLITPLEVNHLQLPAPEKVIVKTRTEYQPEQKNKGKFRVPKIAEFTVTILVSLALAFLACIVFLVVYKAFTYDHSCPEGFVYKHKRCIPASLDAYYSSQDPNSRSRFYTVISHYSVAKQSTARAIGPWLSAAAVIHEPKPPKTQGH.

Polar residues predominate over residues 1–10 (MVKLNSNPSE). Residues 1-21 (MVKLNSNPSEKGTKPPSVEDG) form a disordered region. Over 1–71 (MVKLNSNPSE…FRVPKIAEFT (71 aa)) the chain is Cytoplasmic. A helical; Signal-anchor for type II membrane protein transmembrane segment spans residues 72–92 (VTILVSLALAFLACIVFLVVY). Residues 93–171 (KAFTYDHSCP…EPKPPKTQGH (79 aa)) are Lumenal-facing.

The protein belongs to the NSG family.

It localises to the membrane. The protein localises to the golgi apparatus. The protein resides in the trans-Golgi network membrane. It is found in the cell projection. Its subcellular location is the dendrite. It localises to the endosome membrane. The protein localises to the early endosome membrane. The protein resides in the late endosome membrane. It is found in the lysosome lumen. Its subcellular location is the cytoplasmic vesicle membrane. It localises to the golgi stack membrane. The protein localises to the endosome. The protein resides in the multivesicular body membrane. This is Neuronal vesicle trafficking-associated protein 2 from Homo sapiens (Human).